We begin with the raw amino-acid sequence, 89 residues long: Microcin N (89 aa).

The first 15 residues, 1–15 (MRELDREELNCVGGA), serve as a signal peptide directing secretion.

The protein belongs to the class IIa microcin family. In terms of processing, mass spectrometry suggests 3 of the 4 Met residues of the mature peptide are oxidized.

Its subcellular location is the secreted. Functionally, active against E.coli and Salmonella, but not Listeria or Campylobacter. Channel-forming microcin. Probably neutralized by its immunity protein McnI. The chain is Microcin N from Escherichia coli.